The chain runs to 502 residues: Protein Dok-7 (502 aa).

One can recognise a PH domain in the interval 4–109 (SVVVEGYARL…WDARLRYSLG (106 aa)). An IRS-type PTB domain is found at 105–210 (RYSLGEVHRF…RGISPTRGPF (106 aa)). Disordered regions lie at residues 210-232 (FGLR…RLNH), 249-279 (STAS…SDCS), 291-358 (TSIQ…GSFS), and 418-482 (EVGG…GHPG). Composition is skewed to low complexity over residues 264 to 279 (ISGS…SDCS) and 301 to 316 (AGAK…PLPS). Residues 336–346 (GRQSSSDSGIA) show a composition bias toward polar residues. Residues 347 to 358 (TGSHSSYSGSFS) are compositionally biased toward low complexity. Residues 459–473 (PNEHFRSPSESKKSS) show a composition bias toward basic and acidic residues.

The protein resides in the cell membrane. The protein localises to the synapse. In terms of biological role, probable muscle-intrinsic activator of MUSK that plays an essential role in neuromuscular synaptogenesis. Acts in aneural activation of MUSK and subsequent acetylcholine receptor (AchR) clustering in myotubes. This Takifugu rubripes (Japanese pufferfish) protein is Protein Dok-7 (dok7).